We begin with the raw amino-acid sequence, 348 residues long: MDDNKSKALTAAVGQIEKQFGKGAIMRLGDNQAMDIEAISTGSLTIDIALGIGGLPCGRVVEIYGPESSGKTTLTLQVIAEAQKNGKTCAFVDAEHALDPVYAEKLGVNIDELLVSQPDTGEQALEICDMLVRSGAVDVVIVDSVAALTPKAEIEGDMGDSHVGLQARLMSQALRKLTANIKRSNTLCIFINQIRMKIGVMFGNPETTTGGNALKFYSSVRLDIRRIGAVKEGDEVVGNETRVKVVKNKVAPPFKQAEFMIRYGEGISKEAELIDLGVKQKLVDKAGAWYSYKGDRIGQGKANVMKYLKEHPETANEIETKIRQELLLSKTVKAEEALPQGEDDVLPE.

65-72 contacts ATP; the sequence is GPESSGKT.

It belongs to the RecA family.

Its subcellular location is the cytoplasm. In terms of biological role, can catalyze the hydrolysis of ATP in the presence of single-stranded DNA, the ATP-dependent uptake of single-stranded DNA by duplex DNA, and the ATP-dependent hybridization of homologous single-stranded DNAs. It interacts with LexA causing its activation and leading to its autocatalytic cleavage. This is Protein RecA from Alteromonas mediterranea (strain DSM 17117 / CIP 110805 / LMG 28347 / Deep ecotype).